We begin with the raw amino-acid sequence, 337 residues long: 2-ketoarginine methyltransferase (337 aa).

This sequence belongs to the 2-ketoarginine methyltransferase family.

It carries out the reaction 5-guanidino-2-oxopentanoate + S-adenosyl-L-methionine = (3R)-5-guanidino-3-methyl-2-oxopentanoate + S-adenosyl-L-homocysteine + H(+). It functions in the pathway antibiotic biosynthesis. Functionally, S-adenosyl-L-methionine-dependent methyltransferase involved in the formation of the rare amino acid 3-methylarginine (MeArg), which is incorporated into the peptidyl nucleoside antibiotic arginomycin. Transfers the methyl group from S-adenosyl-L-methionine into 5-guanidino-2-oxopentanoate acid to yield 5-guanidino-3-methyl-2-oxopentanoate, a precursor of MeArg. This chain is 2-ketoarginine methyltransferase, found in Streptomyces arginensis.